Consider the following 112-residue polypeptide: Small ribosomal subunit protein bS6 (112 aa).

The protein belongs to the bacterial ribosomal protein bS6 family.

Functionally, binds together with bS18 to 16S ribosomal RNA. This is Small ribosomal subunit protein bS6 from Chlamydia felis (strain Fe/C-56) (Chlamydophila felis).